A 265-amino-acid polypeptide reads, in one-letter code: Phosphate import ATP-binding protein PstB (265 aa).

The 243-residue stretch at 18–260 (MECRDCHVYY…PEDPRTESYI (243 aa)) folds into the ABC transporter domain. 50 to 57 (GPSGCGKS) lines the ATP pocket.

The protein belongs to the ABC transporter superfamily. Phosphate importer (TC 3.A.1.7) family. In terms of assembly, the complex is composed of two ATP-binding proteins (PstB), two transmembrane proteins (PstC and PstA) and a solute-binding protein (PstS).

It localises to the cell inner membrane. It catalyses the reaction phosphate(out) + ATP + H2O = ADP + 2 phosphate(in) + H(+). Functionally, part of the ABC transporter complex PstSACB involved in phosphate import. Responsible for energy coupling to the transport system. This chain is Phosphate import ATP-binding protein PstB, found in Ruegeria pomeroyi (strain ATCC 700808 / DSM 15171 / DSS-3) (Silicibacter pomeroyi).